An 849-amino-acid polypeptide reads, in one-letter code: Autoinducer 1 sensor kinase/phosphatase LuxN (849 aa).

7 helical membrane passes run 9–29, 41–61, 160–180, 196–216, 220–242, 251–275, and 283–301; these read IVYAKAISLLATVAVVMMWLF, VIFGTHHAAYIAYSVCIIAWI, SYFFIGLVSFVVLTLVNLVAM, IAGILVFMLSTAVIHLGMTYF, FSLTWLPPALSISEMLFVGYALL, YIAYLALSVLLVCAIFVLPLGAIFI, and WLIAIPICALIGITWQLLY. Residues 468–683 enclose the Histidine kinase domain; the sequence is SIAHEMRNPL…EFHLYFPVVP (216 aa). The residue at position 471 (H471) is a Phosphohistidine; by autocatalysis. The Response regulatory domain maps to 722–835; the sequence is TVLIVDDKEV…ALRHVLGNWL (114 aa). The residue at position 771 (D771) is a 4-aspartylphosphate.

The protein resides in the cell inner membrane. The catalysed reaction is ATP + protein L-histidine = ADP + protein N-phospho-L-histidine.. At low cell density, in the absence of AI-1 (autoinducer 1), LuxN has a kinase activity and autophosphorylates on His-471. The phosphoryl group is then transferred on Asp-771 of the response regulator domain. The phosphoryl group is transferred to LuxU, and ultimately to LuxO. At high cell density, in the presence of AI-1, the kinase activity is inactivated, and the response regulator domain has a phosphatase activity. LuxN phosphatase acts on itself. As LuxU could function to establish an equilibrium between the aspartyl-phosphate of LuxN and the aspartyl-phosphate of LuxO, LuxU transfers phosphate from LuxO to LuxN and finally phosphate is drained from the system. In Vibrio harveyi (Beneckea harveyi), this protein is Autoinducer 1 sensor kinase/phosphatase LuxN (luxN).